A 574-amino-acid polypeptide reads, in one-letter code: Aspartate--tRNA ligase (574 aa).

E172 lines the L-aspartate pocket. The aspartate stretch occupies residues 196-199 (QIFK). R218 is a binding site for L-aspartate. ATP-binding positions include 218 to 220 (RDE) and Q227. L-aspartate is bound at residue H453. E487 provides a ligand contact to ATP. R494 serves as a coordination point for L-aspartate. Residue 539–542 (GLDR) participates in ATP binding.

It belongs to the class-II aminoacyl-tRNA synthetase family. Type 1 subfamily. Homodimer.

The protein localises to the cytoplasm. The catalysed reaction is tRNA(Asp) + L-aspartate + ATP = L-aspartyl-tRNA(Asp) + AMP + diphosphate. Its function is as follows. Catalyzes the attachment of L-aspartate to tRNA(Asp) in a two-step reaction: L-aspartate is first activated by ATP to form Asp-AMP and then transferred to the acceptor end of tRNA(Asp). The polypeptide is Aspartate--tRNA ligase (Blochmanniella pennsylvanica (strain BPEN)).